A 104-amino-acid chain; its full sequence is Replication restart protein PriB (104 aa).

An SSB domain is found at 1 to 101 (MTNRLVLSGT…LHAEQIDLID (101 aa)).

This sequence belongs to the PriB family. Homodimer. Interacts with PriA and DnaT. Component of the replication restart primosome. Primosome assembly occurs via a 'hand-off' mechanism. PriA binds to replication forks, subsequently PriB then DnaT bind; DnaT then displaces ssDNA to generate the helicase loading substrate.

Involved in the restart of stalled replication forks, which reloads the replicative helicase on sites other than the origin of replication; the PriA-PriB pathway is the major replication restart pathway. During primosome assembly it facilitates complex formation between PriA and DnaT on DNA; stabilizes PriA on DNA. Stimulates the DNA unwinding activity of PriA helicase. The protein is Replication restart protein PriB of Enterobacter sp. (strain 638).